The chain runs to 145 residues: D-aminoacyl-tRNA deacylase (145 aa).

Residues 137 to 138 carry the Gly-cisPro motif, important for rejection of L-amino acids motif; it reads GP.

The protein belongs to the DTD family. As to quaternary structure, homodimer.

The protein localises to the cytoplasm. The catalysed reaction is glycyl-tRNA(Ala) + H2O = tRNA(Ala) + glycine + H(+). The enzyme catalyses a D-aminoacyl-tRNA + H2O = a tRNA + a D-alpha-amino acid + H(+). Functionally, an aminoacyl-tRNA editing enzyme that deacylates mischarged D-aminoacyl-tRNAs. Also deacylates mischarged glycyl-tRNA(Ala), protecting cells against glycine mischarging by AlaRS. Acts via tRNA-based rather than protein-based catalysis; rejects L-amino acids rather than detecting D-amino acids in the active site. By recycling D-aminoacyl-tRNA to D-amino acids and free tRNA molecules, this enzyme counteracts the toxicity associated with the formation of D-aminoacyl-tRNA entities in vivo and helps enforce protein L-homochirality. In Psychromonas ingrahamii (strain DSM 17664 / CCUG 51855 / 37), this protein is D-aminoacyl-tRNA deacylase.